We begin with the raw amino-acid sequence, 206 residues long: MIDFDGYRPNVGIVICNKAGQVLWAKRFGQNSWQFPQGGINEGENIETAMYRELYEEVGLTKKDVRLLWASKYWLKYKLPKRLVRSDGSQPVCIGQKQRWFLLQLLSDENLIDLKTTKSPEFDGWRWVSFWYPVRQVVSFKRDVYRKVMKEFAGVLLNESKKPETVEKPRVERTEKRDFQKRDNQKREFRKSARTWNNSHQKGKAQ.

The region spanning 6-150 is the Nudix hydrolase domain; it reads GYRPNVGIVI…KRDVYRKVMK (145 aa). Positions 38-59 match the Nudix box motif; the sequence is GGINEGENIETAMYRELYEEVG. Residues 162 to 191 show a composition bias toward basic and acidic residues; that stretch reads KPETVEKPRVERTEKRDFQKRDNQKREFRK. The interval 162 to 206 is disordered; the sequence is KPETVEKPRVERTEKRDFQKRDNQKREFRKSARTWNNSHQKGKAQ.

This sequence belongs to the Nudix hydrolase family. RppH subfamily. A divalent metal cation is required as a cofactor.

Accelerates the degradation of transcripts by removing pyrophosphate from the 5'-end of triphosphorylated RNA, leading to a more labile monophosphorylated state that can stimulate subsequent ribonuclease cleavage. This chain is RNA pyrophosphohydrolase, found in Actinobacillus pleuropneumoniae serotype 3 (strain JL03).